The following is an 86-amino-acid chain: Small ribosomal subunit protein bS16 (86 aa).

Belongs to the bacterial ribosomal protein bS16 family.

The protein is Small ribosomal subunit protein bS16 of Xylella fastidiosa (strain M23).